A 369-amino-acid chain; its full sequence is Anhydro-N-acetylmuramic acid kinase (369 aa).

ATP is bound at residue 12–19; it reads GTSMDGVD.

Belongs to the anhydro-N-acetylmuramic acid kinase family.

It catalyses the reaction 1,6-anhydro-N-acetyl-beta-muramate + ATP + H2O = N-acetyl-D-muramate 6-phosphate + ADP + H(+). The protein operates within amino-sugar metabolism; 1,6-anhydro-N-acetylmuramate degradation. It participates in cell wall biogenesis; peptidoglycan recycling. Functionally, catalyzes the specific phosphorylation of 1,6-anhydro-N-acetylmuramic acid (anhMurNAc) with the simultaneous cleavage of the 1,6-anhydro ring, generating MurNAc-6-P. Is required for the utilization of anhMurNAc either imported from the medium or derived from its own cell wall murein, and thus plays a role in cell wall recycling. This Shewanella sp. (strain MR-4) protein is Anhydro-N-acetylmuramic acid kinase.